We begin with the raw amino-acid sequence, 1377 residues long: DNA-directed RNA polymerase subunit beta (1377 aa).

Belongs to the RNA polymerase beta chain family. In terms of assembly, the RNAP catalytic core consists of 2 alpha, 1 beta, 1 beta' and 1 omega subunit. When a sigma factor is associated with the core the holoenzyme is formed, which can initiate transcription.

It catalyses the reaction RNA(n) + a ribonucleoside 5'-triphosphate = RNA(n+1) + diphosphate. In terms of biological role, DNA-dependent RNA polymerase catalyzes the transcription of DNA into RNA using the four ribonucleoside triphosphates as substrates. The chain is DNA-directed RNA polymerase subunit beta from Brucella suis biovar 1 (strain 1330).